Consider the following 417-residue polypeptide: Fatty-acid peroxygenase (417 aa).

Cysteine 363 contributes to the heme binding site.

This sequence belongs to the cytochrome P450 family. Heme is required as a cofactor.

It carries out the reaction a 1,2-saturated fatty acid + H2O2 = a 2-hydroxy fatty acid + H2O. The catalysed reaction is a 2,3-saturated fatty acid + H2O2 = a 3-hydroxy fatty acid + H2O. The enzyme catalyses tetradecanoate + H2O2 = (3R)-hydroxytetradecanoate + H2O. It catalyses the reaction tetradecanoate + H2O2 = (2R)-hydroxytetradecanoate + H2O. It carries out the reaction tetradecanoate + H2O2 = (2S)-hydroxytetradecanoate + H2O. Functionally, catalyzes the alpha- and beta-hydroxylation of myristic acid in the presence of hydrogen peroxide. This Bacillus subtilis (strain 168) protein is Fatty-acid peroxygenase (cypC).